The chain runs to 212 residues: MKKIPRIGVGGPVGSGKTAIIEAVVPILIKLGYRILVITNDIVTTEDAKHVQRTLKGVLIEDRIVGVETGGCPHTAVREDPSMNLAAVEEMEAKFPDTDLVLLESGGDNLTLTFSPALIDFFIYVIDVAAGDKIPRKNGPGISQSDILVINKTDLAPYVGASLQVMDDDSRMMRGKKPFVFTNCKTNEGIDDLVHLIRENVLFDTEVSKESA.

Residue 11–18 (GPVGSGKT) coordinates GTP.

The protein belongs to the SIMIBI class G3E GTPase family. UreG subfamily. Homodimer. UreD, UreF and UreG form a complex that acts as a GTP-hydrolysis-dependent molecular chaperone, activating the urease apoprotein by helping to assemble the nickel containing metallocenter of UreC. The UreE protein probably delivers the nickel.

The protein resides in the cytoplasm. In terms of biological role, facilitates the functional incorporation of the urease nickel metallocenter. This process requires GTP hydrolysis, probably effectuated by UreG. The protein is Urease accessory protein UreG 2 of Brucella abortus (strain 2308).